A 332-amino-acid chain; its full sequence is Ribosomal RNA small subunit methyltransferase H (332 aa).

S-adenosyl-L-methionine-binding positions include 36–38 (GGY), D54, F81, D102, and Q109. The interval 297 to 318 (ARSAKLRGAERTEAPAHAAGDL) is disordered.

This sequence belongs to the methyltransferase superfamily. RsmH family.

Its subcellular location is the cytoplasm. It carries out the reaction cytidine(1402) in 16S rRNA + S-adenosyl-L-methionine = N(4)-methylcytidine(1402) in 16S rRNA + S-adenosyl-L-homocysteine + H(+). In terms of biological role, specifically methylates the N4 position of cytidine in position 1402 (C1402) of 16S rRNA. In Rhodopseudomonas palustris (strain TIE-1), this protein is Ribosomal RNA small subunit methyltransferase H.